The following is a 1150-amino-acid chain: Voltage-dependent calcium channel subunit alpha-2/delta-2 (1150 aa).

An N-terminal signal peptide occupies residues 1-18 (MAVPARTCGASRPGPART). The segment at 1–41 (MAVPARTCGASRPGPARTARPWPGCGPHPGPGTRRPTSGPP) is disordered. The Extracellular portion of the chain corresponds to 19 to 1113 (ARPWPGCGPH…TEDTSDCGRG (1095 aa)). The VWFA domain maps to 291–469 (DMVIIVDVSG…INTQEYLDVL (179 aa)). Positions 297, 299, and 301 each coordinate a divalent metal cation. The short motif at 297–301 (DVSGS) is the MIDAS-like motif element. 6 N-linked (GlcNAc...) asparagine glycosylation sites follow: asparagine 386, asparagine 418, asparagine 507, asparagine 540, asparagine 624, and asparagine 861. Cysteine 443 and cysteine 1098 form a disulfide bridge. Residues 485 to 574 (WTNVYEDALG…KPQTTNFREP (90 aa)) enclose the Cache domain. A helical membrane pass occupies residues 1114–1134 (ASFPPSLGVLVSLQLLLLLGL). Over 1135–1150 (PPRPQPQVLVHASRRL) the chain is Cytoplasmic.

This sequence belongs to the calcium channel subunit alpha-2/delta family. As to quaternary structure, dimer formed of alpha-2-2 and delta-2 chains; disulfide-linked. Voltage-dependent calcium channels are multisubunit complexes, consisting of alpha-1 (CACNA1), alpha-2 (CACNA2D), beta (CACNB) and delta (CACNA2D) subunits in a 1:1:1:1 ratio. May be proteolytically processed into subunits alpha-2-2 and delta-2 that are disulfide-linked. It is however unclear whether such cleavage really takes place in vivo and has a functional role. As to expression, predominantly present in cerebellar cortex. Present in various lung tumor cell lines, while it is absent in normal lung (at protein level). Highly expressed in heart, lung, testis, pancreas and skeletal muscle. Also expressed in kidney, liver, placenta and brain.

It localises to the membrane. Its function is as follows. The alpha-2/delta subunit of voltage-dependent calcium channels regulates calcium current density and activation/inactivation kinetics of the calcium channel. Acts as a regulatory subunit for P/Q-type calcium channel (CACNA1A), N-type (CACNA1B), L-type (CACNA1C OR CACNA1D) and possibly T-type (CACNA1G). Overexpression induces apoptosis. This chain is Voltage-dependent calcium channel subunit alpha-2/delta-2 (CACNA2D2), found in Homo sapiens (Human).